The following is a 398-amino-acid chain: Elongation factor Tu (398 aa).

The region spanning 10–207 (KPHVNIGTIG…TVDEYIPEPE (198 aa)) is the tr-type G domain. A G1 region spans residues 19–26 (GHVDHGKT). GTP is bound at residue 19 to 26 (GHVDHGKT). Mg(2+) is bound at residue T26. The interval 63 to 67 (GITIN) is G2. A G3 region spans residues 84–87 (DAPG). GTP contacts are provided by residues 84-88 (DAPGH) and 139-142 (NKVD). The segment at 139 to 142 (NKVD) is G4. The G5 stretch occupies residues 177 to 179 (SAL).

It belongs to the TRAFAC class translation factor GTPase superfamily. Classic translation factor GTPase family. EF-Tu/EF-1A subfamily. As to quaternary structure, monomer.

The protein resides in the cytoplasm. The enzyme catalyses GTP + H2O = GDP + phosphate + H(+). In terms of biological role, GTP hydrolase that promotes the GTP-dependent binding of aminoacyl-tRNA to the A-site of ribosomes during protein biosynthesis. This chain is Elongation factor Tu, found in Streptococcus suis (strain 98HAH33).